A 140-amino-acid chain; its full sequence is FLYWCH family member 2 (140 aa).

Disordered regions lie at residues 1-39 and 83-140; these read MPLP…PREF and THPE…GKSL. The residue at position 21 (S21) is a Phosphoserine. Basic and acidic residues predominate over residues 98 to 114; it reads PEQKRSRQDPGADRTED. The span at 118–127 shows a compositional bias: low complexity; the sequence is AAGPPEAAGE.

This is FLYWCH family member 2 (FLYWCH2) from Pongo abelii (Sumatran orangutan).